The following is a 148-amino-acid chain: 3-dehydroquinate dehydratase (148 aa).

Y23 (proton acceptor) is an active-site residue. Residues N75, H81, and D88 each contribute to the substrate site. H101 serves as the catalytic Proton donor. Residues 102 to 103 (MS) and R112 contribute to the substrate site.

The protein belongs to the type-II 3-dehydroquinase family. As to quaternary structure, homododecamer.

It catalyses the reaction 3-dehydroquinate = 3-dehydroshikimate + H2O. The protein operates within metabolic intermediate biosynthesis; chorismate biosynthesis; chorismate from D-erythrose 4-phosphate and phosphoenolpyruvate: step 3/7. Its function is as follows. Catalyzes a trans-dehydration via an enolate intermediate. The chain is 3-dehydroquinate dehydratase from Syntrophotalea carbinolica (strain DSM 2380 / NBRC 103641 / GraBd1) (Pelobacter carbinolicus).